We begin with the raw amino-acid sequence, 468 residues long: MENTRRNFLKKVTAAGIGAAGLAVTDQAMAAVNQPGEAAQQKKKPAGKSDGMLRFGFIGTGSRCQEHINNVLGIQGNKIVAICDIQKGPLEKTLKHIAKFNVPEPKVYTGGEREFEKMLNNEEFDCVIIASPWEWHVPMAVAAMKAGVPYVGVEVSAANTVEECWDLVNVSEATGSHLNILENVCYRRDVMAALRMVREGLFGEMIHGTCGYQHDLRDVKFNDGIHYTYQEGGELRMGPTAYAEAQWRTQHSVTRNGDIYPTHGIGPVANCLNINRGNRFLSLTSMATQSRGLHNFVVDKGGANHPYAKIHFNLGDIVTSMIKCANGQTVIVTHDTNLPRPYSLGFRIQGTRGLWMNDGNHVYVEGQSKPHRWDASDDWFKKYDHKLWSTLELKAKEAGHGGMDYIMMYDFIDAIRNKKPTPMDCYDAAAWSAISGLSEMSIARGGAVVDFPDFTRGQWIHRQPAFAL.

The segment at residues 1–30 is a signal peptide (tat-type signal); the sequence is MENTRRNFLKKVTAAGIGAAGLAVTDQAMA. NAD(+) is bound by residues 62-63, Asp-84, 133-136, 154-155, and Asn-183; these read SR, WEWH, and EV. Tyr-212 lines the substrate pocket. Position 243–247 (243–247) interacts with NAD(+); the sequence is AEAQW. Substrate is bound by residues Arg-248, 260–263, and Tyr-342; that span reads YPTH. Tyr-260 is an NAD(+) binding site.

It belongs to the Gfo/Idh/MocA family. Glycosyl hydrolase 109 subfamily. NAD(+) is required as a cofactor. Predicted to be exported by the Tat system. The position of the signal peptide cleavage has not been experimentally proven.

The enzyme catalyses Cleavage of non-reducing alpha-(1-&gt;3)-N-acetylgalactosamine residues from human blood group A and AB mucin glycoproteins, Forssman hapten and blood group A lacto series glycolipids.. Glycosidase that has specific alpha-N-acetylgalactosaminidase activity. The polypeptide is Alpha-N-acetylgalactosaminidase (nagA) (Tannerella forsythia (Bacteroides forsythus)).